Here is a 253-residue protein sequence, read N- to C-terminus: Sulfate transporter CysZ (253 aa).

The next 4 membrane-spanning stretches (helical) occupy residues 31–51, 75–95, 151–171, and 222–242; these read FVIL…WWLF, LLWP…FSTI, IVLL…PVLW, and IPLL…AMWV.

Belongs to the CysZ family.

The protein resides in the cell inner membrane. Its function is as follows. High affinity, high specificity proton-dependent sulfate transporter, which mediates sulfate uptake. Provides the sulfur source for the cysteine synthesis pathway. This is Sulfate transporter CysZ from Escherichia coli O139:H28 (strain E24377A / ETEC).